The following is a 306-amino-acid chain: WUSCHEL-related homeobox 13 (306 aa).

Pro residues predominate over residues 1 to 11 (MMALGVPPPPS). Disordered regions lie at residues 1-20 (MMAL…GPLR), 103-142 (PRSH…PRPE), and 190-276 (SRSK…ARAT). Over residues 126-142 (GEERVPDPKPRRNPRPE) the composition is skewed to basic and acidic residues. A DNA-binding region (homeobox; WUS-type) is located at residues 132–196 (DPKPRRNPRP…NRKSRSKNKL (65 aa)). Positions 199–210 (GGTGRAGLGLGG) are enriched in gly residues. A compositionally biased stretch (pro residues) spans 231 to 242 (FTPPPILPPQPV). The span at 243–270 (QPQQQLVSPVAAPTSLSSSSSDRSSGSS) shows a compositional bias: low complexity.

The protein belongs to the WUS homeobox family.

The protein localises to the nucleus. Its function is as follows. Transcription factor which may be involved in developmental processes. The protein is WUSCHEL-related homeobox 13 (WOX13) of Oryza sativa subsp. japonica (Rice).